A 90-amino-acid polypeptide reads, in one-letter code: Small ribosomal subunit protein uS15c (90 aa).

Belongs to the universal ribosomal protein uS15 family. In terms of assembly, part of the 30S ribosomal subunit.

It localises to the plastid. Its subcellular location is the chloroplast. This chain is Small ribosomal subunit protein uS15c (rps15-A), found in Brachypodium distachyon (Purple false brome).